The primary structure comprises 354 residues: Uroporphyrinogen decarboxylase (354 aa).

Residues 27–31, Asp77, Tyr154, Ser209, and His327 each bind substrate; that span reads RQAGR.

It belongs to the uroporphyrinogen decarboxylase family. In terms of assembly, homodimer.

Its subcellular location is the cytoplasm. It catalyses the reaction uroporphyrinogen III + 4 H(+) = coproporphyrinogen III + 4 CO2. It participates in porphyrin-containing compound metabolism; protoporphyrin-IX biosynthesis; coproporphyrinogen-III from 5-aminolevulinate: step 4/4. Catalyzes the decarboxylation of four acetate groups of uroporphyrinogen-III to yield coproporphyrinogen-III. The polypeptide is Uroporphyrinogen decarboxylase (Shewanella piezotolerans (strain WP3 / JCM 13877)).